Reading from the N-terminus, the 23-residue chain is Magainin-R1 (23 aa).

In terms of tissue distribution, expressed by the skin glands.

The protein resides in the secreted. Antimicrobial peptide. The chain is Magainin-R1 from Xenopus ruwenzoriensis (Uganda clawed frog).